The sequence spans 255 residues: Geranylgeranylglyceryl phosphate synthase (255 aa).

Mg(2+) is bound by residues D25 and S54. Sn-glycerol 1-phosphate contacts are provided by residues 173–179, 203–204, and 225–226; these read YLEGGSG, GG, and GT.

It belongs to the GGGP/HepGP synthase family. Group II subfamily. Requires Mg(2+) as cofactor.

The protein resides in the cytoplasm. The catalysed reaction is sn-glycerol 1-phosphate + (2E,6E,10E)-geranylgeranyl diphosphate = sn-3-O-(geranylgeranyl)glycerol 1-phosphate + diphosphate. The protein operates within membrane lipid metabolism; glycerophospholipid metabolism. Its function is as follows. Prenyltransferase that catalyzes the transfer of the geranylgeranyl moiety of geranylgeranyl diphosphate (GGPP) to the C3 hydroxyl of sn-glycerol-1-phosphate (G1P). This reaction is the first ether-bond-formation step in the biosynthesis of archaeal membrane lipids. The sequence is that of Geranylgeranylglyceryl phosphate synthase from Thermofilum pendens (strain DSM 2475 / Hrk 5).